The chain runs to 228 residues: Small ribosomal subunit protein uS3 (228 aa).

The region spanning 39–107 (VREFIRERLK…PVHINIEEIR (69 aa)) is the KH type-2 domain.

It belongs to the universal ribosomal protein uS3 family. As to quaternary structure, part of the 30S ribosomal subunit. Forms a tight complex with proteins S10 and S14.

In terms of biological role, binds the lower part of the 30S subunit head. Binds mRNA in the 70S ribosome, positioning it for translation. In Halorhodospira halophila (strain DSM 244 / SL1) (Ectothiorhodospira halophila (strain DSM 244 / SL1)), this protein is Small ribosomal subunit protein uS3.